Here is a 360-residue protein sequence, read N- to C-terminus: Peptide chain release factor 1 (360 aa).

Residue Gln-234 is modified to N5-methylglutamine.

Belongs to the prokaryotic/mitochondrial release factor family. Post-translationally, methylated by PrmC. Methylation increases the termination efficiency of RF1.

Its subcellular location is the cytoplasm. Functionally, peptide chain release factor 1 directs the termination of translation in response to the peptide chain termination codons UAG and UAA. This chain is Peptide chain release factor 1, found in Clostridium botulinum (strain Alaska E43 / Type E3).